The primary structure comprises 199 residues: UPF0462 protein C4orf33 homolog (199 aa).

The protein belongs to the UPF0462 family.

This is UPF0462 protein C4orf33 homolog from Rattus norvegicus (Rat).